A 1142-amino-acid polypeptide reads, in one-letter code: Serine/threonine-protein kinase GIN4 (1142 aa).

The 271-residue stretch at 19-289 (WKLGETLGLG…TRDILKHPLL (271 aa)) folds into the Protein kinase domain. ATP contacts are provided by residues 25–33 (LGLGSTGKV) and Lys48. Residue Asp156 is the Proton acceptor of the active site. Disordered regions lie at residues 378-412 (KKRQ…SVTS) and 425-469 (ASSA…RNKR). A compositionally biased stretch (low complexity) spans 382 to 395 (SISSVSVSPSKKVS). At Ser406 the chain carries Phosphoserine. Over residues 425–440 (ASSASSSNLTTPGSSK) the composition is skewed to low complexity. The span at 441–452 (RLSKNFSSKKKL) shows a compositional bias: basic residues. A compositionally biased stretch (polar residues) spans 454–465 (TIVNQSSPTPAS). Residues Ser465, Ser471, Ser617, Ser689, Ser719, Ser805, Ser807, and Ser883 each carry the phosphoserine modification. A disordered region spans residues 676-698 (DPGIMFSSPTEEVSPVEPKRTEN). Thr884 is subject to Phosphothreonine. Residues 903 to 1031 (NEAKQTDNLH…NTAIGNGSFF (129 aa)) are disordered. 3 stretches are compositionally biased toward basic and acidic residues: residues 923-937 (NELR…DQAH), 962-984 (KEEK…KVVD), and 996-1021 (KIRE…KQDK). Position 930 is a phosphoserine (Ser930).

The protein belongs to the protein kinase superfamily. CAMK Ser/Thr protein kinase family. NIM1 subfamily. Component of the GIN4 complex composed of at least BNI5, CDC3, CDC10, CDC11, CDC12, GIN4, NAP1 and SHS1 which forms a ring at the bud neck.

The protein localises to the cytoplasm. The protein resides in the bud neck. The enzyme catalyses L-seryl-[protein] + ATP = O-phospho-L-seryl-[protein] + ADP + H(+). The catalysed reaction is L-threonyl-[protein] + ATP = O-phospho-L-threonyl-[protein] + ADP + H(+). Its function is as follows. Serine/threonine-protein kinase which regulates the localization and the function of the septins during mitosis. Phosphorylates SHS1. The sequence is that of Serine/threonine-protein kinase GIN4 (GIN4) from Saccharomyces cerevisiae (strain ATCC 204508 / S288c) (Baker's yeast).